Here is a 365-residue protein sequence, read N- to C-terminus: DNA replication and repair protein RecF (365 aa).

Residue 30–37 (GRNAQGKT) participates in ATP binding.

The protein belongs to the RecF family.

The protein resides in the cytoplasm. Functionally, the RecF protein is involved in DNA metabolism; it is required for DNA replication and normal SOS inducibility. RecF binds preferentially to single-stranded, linear DNA. It also seems to bind ATP. The protein is DNA replication and repair protein RecF of Streptococcus pneumoniae (strain 70585).